The sequence spans 156 residues: Small ribosomal subunit protein uS7c (156 aa).

This sequence belongs to the universal ribosomal protein uS7 family. Part of the 30S ribosomal subunit.

It is found in the plastid. The protein localises to the chloroplast. Functionally, one of the primary rRNA binding proteins, it binds directly to 16S rRNA where it nucleates assembly of the head domain of the 30S subunit. This is Small ribosomal subunit protein uS7c (rps7) from Chara vulgaris (Common stonewort).